Reading from the N-terminus, the 1306-residue chain is Contactin-associated protein-like 5 (1306 aa).

The first 24 residues, 1–24 (MDSLPRLTSVLTLLFSGLWHLGLT), serve as a signal peptide directing secretion. Residues 25 to 1237 (ATNYNCDDPL…PLTNAVRSDS (1213 aa)) lie on the Extracellular side of the membrane. Residues 30–174 (CDDPLASLLS…IGMRVEVYGC (145 aa)) form the F5/8 type C domain. A disulfide bridge links cysteine 30 with cysteine 174. Laminin G-like domains follow at residues 180-360 (VADF…TFSC) and 367-544 (PITF…IDLC). Residues asparagine 282, asparagine 355, and asparagine 496 are each glycosylated (N-linked (GlcNAc...) asparagine). The cysteines at positions 329 and 360 are disulfide-linked. 3 cysteine pairs are disulfide-bonded: cysteine 512–cysteine 544, cysteine 550–cysteine 561, and cysteine 555–cysteine 570. The EGF-like 1 domain occupies 546–583 (IKDRCLPNYCEHGGSCSQSWTTFYCNCSDTSYTGATCH). Residue asparagine 571 is glycosylated (N-linked (GlcNAc...) asparagine). The cysteines at positions 572 and 582 are disulfide-linked. In terms of domain architecture, Fibrinogen C-terminal spans 584–790 (NSIYEQSCEV…LRCYGDRRFW (207 aa)). Asparagine 622 is a glycosylation site (N-linked (GlcNAc...) asparagine). A Laminin G-like 3 domain is found at 791-956 (NAVSFYTEAS…KVTSGVRPGC (166 aa)). Intrachain disulfides connect cysteine 929–cysteine 956, cysteine 960–cysteine 973, cysteine 967–cysteine 982, cysteine 984–cysteine 994, and cysteine 1164–cysteine 1199. Residues 957-995 (PGHCSSYGSICHNGGKCVEKHNGYLCDCTNSPYEGPFCK) enclose the EGF-like 2 domain. Residues 1013 to 1199 (QEPYPVTKNI…VHGTLTESSC (187 aa)) form the Laminin G-like 4 domain. The chain crosses the membrane as a helical span at residues 1238-1258 (AVIGGVIAVVIFIIFCIIGIM). Topologically, residues 1259–1306 (TRFLYQHKQSHRTSQMKEKEYPENLDSSFRNEIDLQNTVSECKREYFI) are cytoplasmic.

The protein belongs to the neurexin family.

The protein resides in the membrane. Functionally, may play a role in the correct development and proper functioning of the peripheral and central nervous system and be involved in cell adhesion and intercellular communication. The chain is Contactin-associated protein-like 5 (CNTNAP5) from Homo sapiens (Human).